Consider the following 711-residue polypeptide: Ribosomal RNA large subunit methyltransferase K/L (711 aa).

In terms of domain architecture, THUMP spans 42 to 153 (DAQRAVLWSR…KGRATISVDL (112 aa)).

This sequence belongs to the methyltransferase superfamily. RlmKL family.

Its subcellular location is the cytoplasm. The enzyme catalyses guanosine(2445) in 23S rRNA + S-adenosyl-L-methionine = N(2)-methylguanosine(2445) in 23S rRNA + S-adenosyl-L-homocysteine + H(+). It catalyses the reaction guanosine(2069) in 23S rRNA + S-adenosyl-L-methionine = N(2)-methylguanosine(2069) in 23S rRNA + S-adenosyl-L-homocysteine + H(+). In terms of biological role, specifically methylates the guanine in position 2445 (m2G2445) and the guanine in position 2069 (m7G2069) of 23S rRNA. In Xanthomonas campestris pv. campestris (strain 8004), this protein is Ribosomal RNA large subunit methyltransferase K/L.